The primary structure comprises 239 residues: Proteasome subunit beta type-6 (239 aa).

Alanine 2 is subject to N-acetylalanine. Residues 2–34 (AATLVAARGTRPAPAWGPEAIAPDWENREVSTG) constitute a propeptide, removed in mature form. Catalysis depends on threonine 35, which acts as the Nucleophile. Threonine 69 is modified (phosphothreonine).

Belongs to the peptidase T1B family. In terms of assembly, the 26S proteasome consists of a 20S proteasome core and two 19S regulatory subunits. The 20S proteasome core is a barrel-shaped complex made of 28 subunits that are arranged in four stacked rings. The two outer rings are each formed by seven alpha subunits, and the two inner rings are formed by seven beta subunits. The proteolytic activity is exerted by three beta-subunits PSMB5, PSMB6 and PSMB7.

Its subcellular location is the cytoplasm. The protein resides in the nucleus. The catalysed reaction is Cleavage of peptide bonds with very broad specificity.. Functionally, component of the 20S core proteasome complex involved in the proteolytic degradation of most intracellular proteins. This complex plays numerous essential roles within the cell by associating with different regulatory particles. Associated with two 19S regulatory particles, forms the 26S proteasome and thus participates in the ATP-dependent degradation of ubiquitinated proteins. The 26S proteasome plays a key role in the maintenance of protein homeostasis by removing misfolded or damaged proteins that could impair cellular functions, and by removing proteins whose functions are no longer required. Associated with the PA200 or PA28, the 20S proteasome mediates ubiquitin-independent protein degradation. This type of proteolysis is required in several pathways including spermatogenesis (20S-PA200 complex) or generation of a subset of MHC class I-presented antigenic peptides (20S-PA28 complex). Within the 20S core complex, PSMB6 displays a peptidylglutamyl-hydrolyzing activity also termed postacidic or caspase-like activity, meaning that the peptides bond hydrolysis occurs directly after acidic residues. This is Proteasome subunit beta type-6 (PSMB6) from Bos taurus (Bovine).